We begin with the raw amino-acid sequence, 178 residues long: Large ribosomal subunit protein uL6 (178 aa).

Belongs to the universal ribosomal protein uL6 family. In terms of assembly, part of the 50S ribosomal subunit.

Its function is as follows. This protein binds to the 23S rRNA, and is important in its secondary structure. It is located near the subunit interface in the base of the L7/L12 stalk, and near the tRNA binding site of the peptidyltransferase center. The protein is Large ribosomal subunit protein uL6 of Lactococcus lactis subsp. cremoris (strain SK11).